A 201-amino-acid polypeptide reads, in one-letter code: Peptidyl-tRNA hydrolase (201 aa).

Tyr14 lines the tRNA pocket. His19 (proton acceptor) is an active-site residue. TRNA is bound by residues Tyr64, Asn66, and Asn112.

It belongs to the PTH family. As to quaternary structure, monomer.

It localises to the cytoplasm. The catalysed reaction is an N-acyl-L-alpha-aminoacyl-tRNA + H2O = an N-acyl-L-amino acid + a tRNA + H(+). Hydrolyzes ribosome-free peptidyl-tRNAs (with 1 or more amino acids incorporated), which drop off the ribosome during protein synthesis, or as a result of ribosome stalling. Functionally, catalyzes the release of premature peptidyl moieties from peptidyl-tRNA molecules trapped in stalled 50S ribosomal subunits, and thus maintains levels of free tRNAs and 50S ribosomes. The chain is Peptidyl-tRNA hydrolase from Bradyrhizobium diazoefficiens (strain JCM 10833 / BCRC 13528 / IAM 13628 / NBRC 14792 / USDA 110).